We begin with the raw amino-acid sequence, 308 residues long: CASP-like protein 4A2 (308 aa).

The disordered stretch occupies residues 1–135; it reads MALEAQPSPS…APAPAPRVPA (135 aa). Over 1–161 the chain is Cytoplasmic; that stretch reads MALEAQPSPS…KRPTAVLQRT (161 aa). Residues 22-31 are compositionally biased toward gly residues; that stretch reads GGAGAPGGSA. Residues 32–44 are compositionally biased toward low complexity; it reads GDADAQARRATSG. Composition is skewed to pro residues over residues 54–65 and 89–132; these read RRSPPPPFPRTP and FQPP…PAPR. The chain crosses the membrane as a helical span at residues 162-182; it reads ALVARVAAALLCLAALAVLAA. Topologically, residues 183 to 203 are extracellular; the sequence is DSRKGFALDSYSNYSQLRYSE. The N-linked (GlcNAc...) asparagine glycan is linked to asparagine 195. Residues 204-224 form a helical membrane-spanning segment; that stretch reads AVNVIGFVYSVLQFFVLADLM. The Cytoplasmic portion of the chain corresponds to 225–240; the sequence is RRNKHLNPRRKGDYFD. Residues 241–262 traverse the membrane as a helical segment; sequence FFMDQVLAYLLISSSSSATARV. Residues 263 to 280 lie on the Extracellular side of the membrane; the sequence is GDWIDNWGSDPFPKMANS. N-linked (GlcNAc...) asparagine glycosylation occurs at asparagine 279. The helical transmembrane segment at 281-301 threads the bilayer; it reads SIAISFMAFLVFAISALISAY. Residues 302 to 308 lie on the Cytoplasmic side of the membrane; that stretch reads NLFRRDI.

The protein belongs to the Casparian strip membrane proteins (CASP) family. In terms of assembly, homodimer and heterodimers.

It is found in the cell membrane. The protein is CASP-like protein 4A2 of Oryza sativa subsp. japonica (Rice).